Here is a 442-residue protein sequence, read N- to C-terminus: Probable carboxypeptidase PAAG_00768 (442 aa).

Positions 1–20 (MKLQYLVALLFVQAVPPVTA) are cleaved as a signal peptide. Residue Asn-102 is glycosylated (N-linked (GlcNAc...) asparagine). Zn(2+) is bound at residue Asp-160. Glu-192 (proton acceptor) is an active-site residue. Glu-193 is a binding site for Zn(2+). The N-linked (GlcNAc...) asparagine glycan is linked to Asn-343.

The protein belongs to the peptidase M20A family. It depends on Zn(2+) as a cofactor.

The protein resides in the secreted. The protein is Probable carboxypeptidase PAAG_00768 of Paracoccidioides lutzii (strain ATCC MYA-826 / Pb01) (Paracoccidioides brasiliensis).